Here is a 685-residue protein sequence, read N- to C-terminus: Sodium-dependent phosphate transporter 1 (685 aa).

The next 6 membrane-spanning stretches (helical) occupy residues 25–45, 66–86, 106–126, 162–182, 201–221, and 234–254; these read FLWM…SVGA, ACIL…AKVS, LMAG…AASF, IVLS…LLFY, ALPI…MYSG, and GIIL…WFFV. The span at 482–492 shows a compositional bias: acidic residues; the sequence is VEAEEQEEGSI. Residues 482 to 513 form a disordered region; it reads VEAEEQEEGSIEDVATDRKSSSSSLEERHDQD. Positions 496–513 are enriched in basic and acidic residues; the sequence is ATDRKSSSSSLEERHDQD. 4 helical membrane-spanning segments follow: residues 517–537, 565–585, 606–626, and 656–676; these read VSLL…FAHG, ATPI…LWVW, FSIE…GLPI, and IFLA…AIMA.

The protein belongs to the inorganic phosphate transporter (PiT) (TC 2.A.20) family.

The protein localises to the cell membrane. The catalysed reaction is 2 Na(+)(out) + phosphate(out) = 2 Na(+)(in) + phosphate(in). Sodium-phosphate symporter which preferentially transports the monovalent form of phosphate with a stoichiometry of two sodium ions per phosphate ion. This Xenopus tropicalis (Western clawed frog) protein is Sodium-dependent phosphate transporter 1 (slc20a1).